The following is a 131-amino-acid chain: Type IV wide pilus major component PilA4 (131 aa).

Positions 1–6 (MRNAKG) are cleaved as a propeptide — leader sequence. F7 is modified (N-methylphenylalanine). The chain crosses the membrane as a helical span at residues 7 to 27 (FTLIELLIVIAIIAILAAVLI). Cysteines 95 and 130 form a disulfide.

As to quaternary structure, interacts with PilQ. Post-translationally, found in three forms of 14-kDa, 18-kDa and a glycosylated 23-kDa form. Both narrow and wide pili are glycosylated.

The protein localises to the cell inner membrane. It localises to the cell outer membrane. Its subcellular location is the periplasm. Its function is as follows. Plays an essential role in the assembly of two types of T4P pili: a wide and a narrow that participate in natural transformation and twitching motility. Major component of the wide pilus that is essential for natural transformation working as a DNA translocator structure that spans the inner and outer membranes. In addition, participates in the assembly of the narrow pilus composed of the PilA5 subunit that is required for twitching motility. In Thermus thermophilus (strain ATCC BAA-163 / DSM 7039 / HB27), this protein is Type IV wide pilus major component PilA4 (pilA4).